The chain runs to 340 residues: Geranylgeranyl pyrophosphate synthase atmG (340 aa).

Positions 19 to 48 (NLDASYPTSSSLSTEPIDTRSSSPQGSAST) are enriched in polar residues. The segment at 19-51 (NLDASYPTSSSLSTEPIDTRSSSPQGSASTPVD) is disordered. Isopentenyl diphosphate contacts are provided by Lys-69, Arg-72, and His-101. Mg(2+)-binding residues include Asp-108 and Asp-112. Residue Arg-117 participates in dimethylallyl diphosphate binding. Isopentenyl diphosphate is bound at residue Arg-118. Dimethylallyl diphosphate is bound by residues Lys-195, Thr-196, and Gln-229. Position 232 (Asp-232) interacts with Mg(2+). Residues Asn-236, Lys-246, and Lys-256 each coordinate dimethylallyl diphosphate.

Belongs to the FPP/GGPP synthase family. It depends on Mg(2+) as a cofactor.

The enzyme catalyses isopentenyl diphosphate + dimethylallyl diphosphate = (2E)-geranyl diphosphate + diphosphate. It catalyses the reaction isopentenyl diphosphate + (2E)-geranyl diphosphate = (2E,6E)-farnesyl diphosphate + diphosphate. The catalysed reaction is isopentenyl diphosphate + (2E,6E)-farnesyl diphosphate = (2E,6E,10E)-geranylgeranyl diphosphate + diphosphate. Its function is as follows. Geranylgeranyl pyrophosphate synthase; part of the ATM1 gene cluster that mediates the biosynthesis of aflatrem, a tremorgenic mycotoxin with acute neurotoxic effects. Synthesis of geranylgeranyl diphosphate (GGPP) by AtmG (a GGPP synthase) precedes condensation of GGPP with indole 3-glycerol phosphate, followed by epoxidation and cyclization by AtmM (a FAD-dependent monooxygenase) and AtmC (a prenyltransferase) to produce paspaline. AtmB is also essential for paspaline production, but its exact role has not been identified yet. AtmP, a cytochrome P450 monooxygenase, subsequently converts paspaline to 13-desoxypaxilline via PC-M6 by removal of the C-30 methyl group and oxidation at C-10. AtmQ, a cytochrome P450 monooxygenase, then catalyzes the oxidation of 13-desoxypaxilline, first at C-7 to produce paspalicine and then at C-13 to form paspalinine. Finally, AtmD prenylates paspalinine to form aflatrem. The sequence is that of Geranylgeranyl pyrophosphate synthase atmG from Aspergillus flavus.